Here is a 305-residue protein sequence, read N- to C-terminus: Ribonuclease Z (305 aa).

Positions 61, 63, 65, 66, 138, 208, and 266 each coordinate Zn(2+). D65 functions as the Proton acceptor in the catalytic mechanism.

The protein belongs to the RNase Z family. As to quaternary structure, homodimer. The cofactor is Zn(2+).

It catalyses the reaction Endonucleolytic cleavage of RNA, removing extra 3' nucleotides from tRNA precursor, generating 3' termini of tRNAs. A 3'-hydroxy group is left at the tRNA terminus and a 5'-phosphoryl group is left at the trailer molecule.. Its function is as follows. Zinc phosphodiesterase, which displays some tRNA 3'-processing endonuclease activity. Probably involved in tRNA maturation, by removing a 3'-trailer from precursor tRNA. This chain is Ribonuclease Z, found in Methanosarcina mazei (strain ATCC BAA-159 / DSM 3647 / Goe1 / Go1 / JCM 11833 / OCM 88) (Methanosarcina frisia).